Reading from the N-terminus, the 208-residue chain is ATP-dependent Clp protease proteolytic subunit (208 aa).

The Nucleophile role is filled by S107. The active site involves H132.

It belongs to the peptidase S14 family. Fourteen ClpP subunits assemble into 2 heptameric rings which stack back to back to give a disk-like structure with a central cavity, resembling the structure of eukaryotic proteasomes.

The protein localises to the cytoplasm. It catalyses the reaction Hydrolysis of proteins to small peptides in the presence of ATP and magnesium. alpha-casein is the usual test substrate. In the absence of ATP, only oligopeptides shorter than five residues are hydrolyzed (such as succinyl-Leu-Tyr-|-NHMec, and Leu-Tyr-Leu-|-Tyr-Trp, in which cleavage of the -Tyr-|-Leu- and -Tyr-|-Trp bonds also occurs).. Its function is as follows. Cleaves peptides in various proteins in a process that requires ATP hydrolysis. Has a chymotrypsin-like activity. Plays a major role in the degradation of misfolded proteins. This chain is ATP-dependent Clp protease proteolytic subunit, found in Methylorubrum populi (strain ATCC BAA-705 / NCIMB 13946 / BJ001) (Methylobacterium populi).